Consider the following 396-residue polypeptide: Elongation factor Tu 2 (396 aa).

In terms of domain architecture, tr-type G spans lysine 10–glutamate 206. Positions glycine 19–threonine 26 are G1. Residue glycine 19 to threonine 26 participates in GTP binding. Mg(2+) is bound at residue threonine 26. A G2 region spans residues glycine 60 to asparagine 64. The interval aspartate 81 to glycine 84 is G3. Residues aspartate 81–histidine 85 and asparagine 136–aspartate 139 each bind GTP. The interval asparagine 136–aspartate 139 is G4. The segment at serine 174 to leucine 176 is G5.

Belongs to the TRAFAC class translation factor GTPase superfamily. Classic translation factor GTPase family. EF-Tu/EF-1A subfamily. Monomer.

The protein resides in the cytoplasm. It catalyses the reaction GTP + H2O = GDP + phosphate + H(+). In terms of biological role, GTP hydrolase that promotes the GTP-dependent binding of aminoacyl-tRNA to the A-site of ribosomes during protein biosynthesis. This is Elongation factor Tu 2 from Hyphomonas neptunium (strain ATCC 15444).